The sequence spans 347 residues: N-acetyl-gamma-glutamyl-phosphate reductase (347 aa).

Residue Cys150 is part of the active site.

It belongs to the NAGSA dehydrogenase family. Type 1 subfamily.

It localises to the cytoplasm. It carries out the reaction N-acetyl-L-glutamate 5-semialdehyde + phosphate + NADP(+) = N-acetyl-L-glutamyl 5-phosphate + NADPH + H(+). Its pathway is amino-acid biosynthesis; L-arginine biosynthesis; N(2)-acetyl-L-ornithine from L-glutamate: step 3/4. In terms of biological role, catalyzes the NADPH-dependent reduction of N-acetyl-5-glutamyl phosphate to yield N-acetyl-L-glutamate 5-semialdehyde. The protein is N-acetyl-gamma-glutamyl-phosphate reductase of Halothermothrix orenii (strain H 168 / OCM 544 / DSM 9562).